Here is a 143-residue protein sequence, read N- to C-terminus: Deoxyuridine 5'-triphosphate nucleotidohydrolase (143 aa).

Substrate is bound by residues 63-65, Asn-76, 80-82, and Lys-90; these read RSG and TID.

The protein belongs to the dUTPase family. Requires Mg(2+) as cofactor.

The enzyme catalyses dUTP + H2O = dUMP + diphosphate + H(+). The protein operates within pyrimidine metabolism; dUMP biosynthesis; dUMP from dCTP (dUTP route): step 2/2. Its function is as follows. This enzyme is involved in nucleotide metabolism: it produces dUMP, the immediate precursor of thymidine nucleotides and it decreases the intracellular concentration of dUTP so that uracil cannot be incorporated into DNA. The polypeptide is Deoxyuridine 5'-triphosphate nucleotidohydrolase (Finegoldia magna (strain ATCC 29328 / DSM 20472 / WAL 2508) (Peptostreptococcus magnus)).